Here is a 92-residue protein sequence, read N- to C-terminus: Small ribosomal subunit protein uS19 (92 aa).

This sequence belongs to the universal ribosomal protein uS19 family.

In terms of biological role, protein S19 forms a complex with S13 that binds strongly to the 16S ribosomal RNA. The polypeptide is Small ribosomal subunit protein uS19 (Albidiferax ferrireducens (strain ATCC BAA-621 / DSM 15236 / T118) (Rhodoferax ferrireducens)).